The sequence spans 627 residues: Serine/threonine-protein kinase Nek5 (627 aa).

Positions 4 to 255 (FHLIKIIGEG…VTSLLKRPFL (252 aa)) constitute a Protein kinase domain. ATP contacts are provided by residues 10-18 (IGEGTFGKV) and Lys-33. Asp-124 serves as the catalytic Proton acceptor. Residues 563 to 580 (QLEPGSDEDDIKFEESED) show a composition bias toward acidic residues. 2 disordered regions span residues 563 to 582 (QLEP…EDEL) and 591 to 627 (EKLA…KKLQ). Over residues 609–619 (NAEEPGEKEKT) the composition is skewed to basic and acidic residues.

Belongs to the protein kinase superfamily. NEK Ser/Thr protein kinase family. NIMA subfamily. Mg(2+) serves as cofactor.

It localises to the cell projection. The protein localises to the cilium. Its subcellular location is the flagellum. It catalyses the reaction L-seryl-[protein] + ATP = O-phospho-L-seryl-[protein] + ADP + H(+). The enzyme catalyses L-threonyl-[protein] + ATP = O-phospho-L-threonyl-[protein] + ADP + H(+). The sequence is that of Serine/threonine-protein kinase Nek5 (Nek5) from Mus musculus (Mouse).